The following is an 82-amino-acid chain: Small ribosomal subunit protein bS16 (82 aa).

Belongs to the bacterial ribosomal protein bS16 family.

The chain is Small ribosomal subunit protein bS16 from Francisella philomiragia subsp. philomiragia (strain ATCC 25017 / CCUG 19701 / FSC 153 / O#319-036).